Reading from the N-terminus, the 181-residue chain is Oligoribonuclease (181 aa).

An Exonuclease domain is found at 8–171; it reads LIWIDLEMTG…DDIRESVAEL (164 aa). The active site involves tyrosine 129.

It belongs to the oligoribonuclease family. Homodimer.

The protein resides in the cytoplasm. 3'-to-5' exoribonuclease specific for small oligoribonucleotides. The sequence is that of Oligoribonuclease from Escherichia coli O157:H7.